A 701-amino-acid chain; its full sequence is Long chain acyl-CoA synthetase 6, peroxisomal (701 aa).

Positions 1–38 are cleaved as a propeptide — removed in mature form; it reads MDSSSSSSSAAARRRINAIHSHLVTSSRSSPLLRSNPT. The Microbody targeting signal motif lies at 15-23; the sequence is RINAIHSHL. ATP is bound at residue 266–277; that stretch reads ICYTSGTTGTPK. Residues 526–550 form a fatty acid-binding region; it reads DGWLHTGDIGLWLPGGRLKIIDRKK.

It belongs to the ATP-dependent AMP-binding enzyme family. Mg(2+) is required as a cofactor. In terms of tissue distribution, expressed in roots, stems, leaves flowers and germinating seedling. Preferentially expressed in seeds and senescent leaves.

Its subcellular location is the peroxisome. The protein resides in the glyoxysome membrane. The enzyme catalyses a long-chain fatty acid + ATP + CoA = a long-chain fatty acyl-CoA + AMP + diphosphate. It catalyses the reaction tetradecanoate + ATP + CoA = tetradecanoyl-CoA + AMP + diphosphate. The catalysed reaction is hexadecanoate + ATP + CoA = hexadecanoyl-CoA + AMP + diphosphate. It carries out the reaction (9Z)-octadecenoate + ATP + CoA = (9Z)-octadecenoyl-CoA + AMP + diphosphate. The enzyme catalyses (9Z,12Z)-octadecadienoate + ATP + CoA = (9Z,12Z)-octadecadienoyl-CoA + AMP + diphosphate. It catalyses the reaction (9Z,12Z,15Z)-octadecatrienoate + ATP + CoA = (9Z,12Z,15Z)-octadecatrienoyl-CoA + AMP + diphosphate. The protein operates within lipid metabolism; fatty acid metabolism. Activation of long-chain fatty acids for both synthesis of cellular lipids, and degradation via beta-oxidation. Preferentially uses palmitate, palmitoleate, oleate, linoleate and eicosenoate as substrates. Can use myristate and linolenate as substrates. May play a regulatory role both in fatty acid import into glyoxysomes and in fatty acid beta-oxidation. Functions redundantly with LACS7 in lipid mobilization for beta-oxidation during seed germination, which is essential for postgerminative growth and seedling establishment. The chain is Long chain acyl-CoA synthetase 6, peroxisomal from Arabidopsis thaliana (Mouse-ear cress).